The following is a 284-amino-acid chain: Thymidylate synthase (284 aa).

Arg34 is a binding site for dUMP. His64 provides a ligand contact to (6R)-5,10-methylene-5,6,7,8-tetrahydrofolate. DUMP is bound at residue 139 to 140; the sequence is RR. The active-site Nucleophile is Cys159. Residues 186–189, Asn197, and 227–229 each bind dUMP; these read RSAD and HIY. Residue Asp189 coordinates (6R)-5,10-methylene-5,6,7,8-tetrahydrofolate. (6R)-5,10-methylene-5,6,7,8-tetrahydrofolate is bound at residue Ala283.

This sequence belongs to the thymidylate synthase family. Bacterial-type ThyA subfamily. In terms of assembly, homodimer.

Its subcellular location is the cytoplasm. It carries out the reaction dUMP + (6R)-5,10-methylene-5,6,7,8-tetrahydrofolate = 7,8-dihydrofolate + dTMP. Its pathway is pyrimidine metabolism; dTTP biosynthesis. In terms of biological role, catalyzes the reductive methylation of 2'-deoxyuridine-5'-monophosphate (dUMP) to 2'-deoxythymidine-5'-monophosphate (dTMP) while utilizing 5,10-methylenetetrahydrofolate (mTHF) as the methyl donor and reductant in the reaction, yielding dihydrofolate (DHF) as a by-product. This enzymatic reaction provides an intracellular de novo source of dTMP, an essential precursor for DNA biosynthesis. This is Thymidylate synthase from Polaromonas sp. (strain JS666 / ATCC BAA-500).